Reading from the N-terminus, the 143-residue chain is ATP synthase F(0) complex subunit C2, mitochondrial (143 aa).

A mitochondrion-targeting transit peptide spans 1–68 (MYTCAKFVST…RSFQTSAISR (68 aa)). Residues 84–104 (VGVAGSGAGIGTVFGSLIIGY) form a helical membrane-spanning segment. An N6,N6,N6-trimethyllysine modification is found at Lys-111. The helical transmembrane segment at 119–139 (ILGFALSEAMGLFCLMVAFLI) threads the bilayer.

Belongs to the ATPase C chain family. In terms of assembly, F-type ATPases have 2 components, CF(1) - the catalytic core - and CF(0) - the membrane proton channel. CF(1) has five subunits: alpha(3), beta(3), gamma(1), delta(1), epsilon(1). CF(0) has three main subunits: a, b and c. Interacts with DNAJC30; interaction is direct. Trimethylated by ATPSCKMT at Lys-111. Methylation is required for proper incorporation of the C subunit into the ATP synthase complex and mitochondrial respiration.

Its subcellular location is the mitochondrion membrane. Functionally, mitochondrial membrane ATP synthase (F(1)F(0) ATP synthase or Complex V) produces ATP from ADP in the presence of a proton gradient across the membrane which is generated by electron transport complexes of the respiratory chain. F-type ATPases consist of two structural domains, F(1) - containing the extramembraneous catalytic core and F(0) - containing the membrane proton channel, linked together by a central stalk and a peripheral stalk. During catalysis, ATP synthesis in the catalytic domain of F(1) is coupled via a rotary mechanism of the central stalk subunits to proton translocation. Part of the complex F(0) domain. A homomeric c-ring of probably 10 subunits is part of the complex rotary element. The chain is ATP synthase F(0) complex subunit C2, mitochondrial from Bos taurus (Bovine).